A 1221-amino-acid polypeptide reads, in one-letter code: MLRSTGFFRAIDCPYWSGAPGGPCRRPYCHFRHRGARGSGAPGDGGEAPPAAGLGYDPYNPELPKPPAQRENGTLGLGEEPRPDVLELELVNQAIEAVRSEVELEQRRYRELLETTREHRSAEAPALAPRGPNASPTVGPDEDAFPLAFDYSPGSHGLLSPDAGYQPTPLAAPAEPGSKYSLASLDRGQGRGGGGGGALEYVPKAVSQPRRHSRPVPSGKYVVDNSRPPTDLEYDPLSNYSARHLSRASSRDERAAKRPRGSRGSEPYTPAPKKLCDPFGSCDARFSDSEDEAATVPGNEPTTASTPKARADPEIKATGQPPSKEGLEAEGGGLRETKETAVQCDVGDLQPPPAKPASPAQVQSSQDGGCPKEGKPKKKKTGAPPAPSCKDGAQGKDKTKDKGRGRPVEKPRADKKGPQASSPRRKAERPEGTKKKPSSATPVATSGKGRPDRPARRPSPTSGDSRPAAGRGPPRPLQLPDRKSTKAPSGKLVERKARSLDEGASQDAPKLKKRALSHADLFGDESEDEAAGPGVPSVWPSALPSLSSDSDSDSDSSLGFPEAQGPPKRLKASPPPSPAPSSSSSSSSSTSSAGADVDYSALEKEVDFDSDPMEECLRIFNESTSVKTEDRGRLARQPPKEEKSEEKGLSGLTTLFPGQKRRISHLSKQGQEVEPPRRGPAVPPARPPTAQEVCYLRAQQAQRASASLLQAPARLAEKSPSVHISAPGEKRRIAHIPNPRLAAAPTGAKRTLAASGSQSSNGPEPGGQQLKTRTLSGMASKTTTTIIPKRIAHSPSLQSLKKPIIPKEFGGKVPTVIRQRYLNLFIEECLKFCTSNQEAIEKALNEEKVAYDRSPSKNIYLNVAVNTLKKLRGLAPSAVPGLSKTSGRRVVSHEVVLGGRLAAKTSFSLSRPSSPRVEDLKGAALYSRLREYLLTQDQLKENGYPFPHPERPGGAIIFTAEEKRPKDSSCRTCCRCGTEYLVSSSGRCIRDEECYYHWGRLRRNRVAGGWETQYMCCSAAAGSVGCQVAKQHVQDGRKERLEGFVKTFEKELSGDTHPGIYALDCEMSYTTYGLELTRVTVVDTDVHVVYDTFVKPDNEIVDYNTRFSGVTEADLADTSVTLRDVQAVLLSMFSADTILIGHSLESDLLALKVIHSTVVDTSVLFPHRLGLPYKRSLRNLMADYLRQIIQDNVDGHSSSEDAGACMHLVIWKVREDAKTKR.

The segment covering 37-46 has biased composition (gly residues); sequence RGSGAPGDGG. The disordered stretch occupies residues 37–75; sequence RGSGAPGDGGEAPPAAGLGYDPYNPELPKPPAQRENGTL. A coiled-coil region spans residues 86 to 115; it reads LELELVNQAIEAVRSEVELEQRRYRELLET. Residues 116 to 598 are disordered; it reads TREHRSAEAP…STSSAGADVD (483 aa). Arginine 191 is subject to Omega-N-methylarginine. Serine 287, serine 289, and serine 358 each carry phosphoserine. Residues 357 to 369 are compositionally biased toward low complexity; sequence ASPAQVQSSQDGG. The span at 393-417 shows a compositional bias: basic and acidic residues; the sequence is AQGKDKTKDKGRGRPVEKPRADKKG. A phosphoserine mark is found at serine 459, serine 499, and serine 526. Over residues 492 to 501 the composition is skewed to basic and acidic residues; it reads LVERKARSLD. The interval 498–577 is interaction with ELOA; the sequence is RSLDEGASQD…KRLKASPPPS (80 aa). The span at 580–593 shows a compositional bias: low complexity; that stretch reads PSSSSSSSSSTSSA. Serine 610 is modified (phosphoserine). Disordered regions lie at residues 619-692 and 735-775; these read IFNE…TAQE and HIPN…TRTL. Basic and acidic residues predominate over residues 627–648; sequence KTEDRGRLARQPPKEEKSEEKG. Position 914 is a phosphoserine (serine 914). The region spanning 1060 to 1209 is the Exonuclease domain; that stretch reads IYALDCEMSY…EDAGACMHLV (150 aa).

This sequence belongs to the REXO1/REXO3 family. Interacts with TCEA2 and ELOA. As to expression, ubiquitously expressed.

It is found in the nucleus. Its function is as follows. Seems to have no detectable effect on transcription elongation in vitro. This Homo sapiens (Human) protein is RNA exonuclease 1 homolog (REXO1).